A 99-amino-acid chain; its full sequence is UPF0473 protein SMU_2077c (99 aa).

The protein belongs to the UPF0473 family.

The sequence is that of UPF0473 protein SMU_2077c from Streptococcus mutans serotype c (strain ATCC 700610 / UA159).